Reading from the N-terminus, the 637-residue chain is Formate--tetrahydrofolate ligase (637 aa).

81 to 88 (TPLGEGKS) is a binding site for ATP.

It belongs to the formate--tetrahydrofolate ligase family. In terms of assembly, homodimer.

It carries out the reaction (6S)-5,6,7,8-tetrahydrofolate + formate + ATP = (6R)-10-formyltetrahydrofolate + ADP + phosphate. Its pathway is one-carbon metabolism; tetrahydrofolate interconversion. The sequence is that of Formate--tetrahydrofolate ligase from Spinacia oleracea (Spinach).